A 236-amino-acid polypeptide reads, in one-letter code: MSYSDPNQNPIPETYAPSNSTESEKLKLYQAFIFSVPICFTFIVLFVLYVIYLRRNSTTNVDWSSLGMRGGTFVPTNNNLSTAELGLSKDIREMLPVVIYKESFIVKDSQCSVCLGDYQAEEKLQQMPSCGHTFHMECIDLWLTSHTTCPLCRLSLIPKPSLDLSHQSTEIVSSIENSNGGEASTQPDSQSATEAISHTDDVEEGNRDSQEVSKETEENDRNSVGTSDGCCTCRLG.

Residues 31-51 (AFIFSVPICFTFIVLFVLYVI) traverse the membrane as a helical segment. The segment at 111-153 (CSVCLGDYQAEEKLQQMPSCGHTFHMECIDLWLTSHTTCPLCR) adopts an RING-type; atypical zinc-finger fold. The span at 176-196 (ENSNGGEASTQPDSQSATEAI) shows a compositional bias: polar residues. Positions 176 to 236 (ENSNGGEAST…SDGCCTCRLG (61 aa)) are disordered. Positions 197–221 (SHTDDVEEGNRDSQEVSKETEENDR) are enriched in basic and acidic residues.

This sequence belongs to the RING-type zinc finger family. ATL subfamily.

It localises to the membrane. The enzyme catalyses S-ubiquitinyl-[E2 ubiquitin-conjugating enzyme]-L-cysteine + [acceptor protein]-L-lysine = [E2 ubiquitin-conjugating enzyme]-L-cysteine + N(6)-ubiquitinyl-[acceptor protein]-L-lysine.. Its pathway is protein modification; protein ubiquitination. The protein is RING-H2 finger protein ATL7 (ATL7) of Arabidopsis thaliana (Mouse-ear cress).